A 240-amino-acid polypeptide reads, in one-letter code: Probable transcriptional regulatory protein VFMJ11_A0186 (240 aa).

The protein belongs to the TACO1 family.

It localises to the cytoplasm. The polypeptide is Probable transcriptional regulatory protein VFMJ11_A0186 (Aliivibrio fischeri (strain MJ11) (Vibrio fischeri)).